Here is a 332-residue protein sequence, read N- to C-terminus: Sesquiterpene synthase MBR_10393 (332 aa).

Residues Asp-91 and Asp-96 each contribute to the Mg(2+) site. A DDXXXD motif motif is present at residues 91–96 (DDLFVD). Arg-184 contributes to the substrate binding site. 3 residues coordinate Mg(2+): Asn-230, Ser-234, and Glu-238.

The protein belongs to the terpene synthase family. Mg(2+) serves as cofactor.

The catalysed reaction is (2E,6E)-farnesyl diphosphate + H2O = (+)-corvol ether B + diphosphate. It catalyses the reaction (2E,6E)-farnesyl diphosphate + H2O = (+)-corvol ether A + diphosphate. Terpene synthase that catalyzes the conversion of (2E,6E)-farnesyl diphosphate (FPP) into sesquiterpenes which are important for fungi-environment interactions. Produces a mixture consisting of 8 sesquiterpenes including corvol ethers A and B, as well as traces of epizonarene, gamma-cadinene, delta-cadinene, alpha-cadinene, alpha-cadinol, and an unidentified sesquiterpene. The major product is corvol ether B. In Metarhizium brunneum (strain ARSEF 3297), this protein is Sesquiterpene synthase MBR_10393.